The chain runs to 129 residues: Putative redox protein FMP46, mitochondrial (129 aa).

Residues 1–21 (MSMFRTLQRQPRTISLFTHDL) constitute a mitochondrion transit peptide. Cys94 is a catalytic residue.

Belongs to the FMP46 family.

It localises to the mitochondrion. In terms of biological role, putative mitochondrial redox protein which could be involved in the reduction of small toxic molecules. The polypeptide is Putative redox protein FMP46, mitochondrial (FMP46) (Candida glabrata (strain ATCC 2001 / BCRC 20586 / JCM 3761 / NBRC 0622 / NRRL Y-65 / CBS 138) (Yeast)).